The sequence spans 846 residues: DNA mismatch repair protein MutS (846 aa).

594-601 contributes to the ATP binding site; sequence GPNMSGKS.

Belongs to the DNA mismatch repair MutS family.

This protein is involved in the repair of mismatches in DNA. It is possible that it carries out the mismatch recognition step. This protein has a weak ATPase activity. The sequence is that of DNA mismatch repair protein MutS from Macrococcus caseolyticus (strain JCSC5402) (Macrococcoides caseolyticum).